A 306-amino-acid polypeptide reads, in one-letter code: Aquaporin-1 (306 aa).

Polar residues predominate over residues 1-23; it reads MASTHSSLTTVQNNANNKSNRTL. The tract at residues 1–24 is disordered; sequence MASTHSSLTTVQNNANNKSNRTLN. Residues 1 to 59 are Cytoplasmic-facing; sequence MASTHSSLTTVQNNANNKSNRTLNTERRLSMESSVFTLYNKAADELDTSQRSAFQACHR. The helical transmembrane segment at 60–80 threads the bilayer; the sequence is EFLAEFIGTVILVLLTCGFCA. Over 81–92 the chain is Extracellular; that stretch reads EQTLHIEESKSW. Residues 93-113 form a helical membrane-spanning segment; it reads LTSSFGSGLSVLIGICVSGHV. The Cytoplasmic segment spans residues 114-145; the sequence is SGAHLNPAVTIAFCIFSGFPIRKVPSYITAQL. Residues 119 to 121 carry the NPA 1 motif; it reads NPA. Residues 146–166 traverse the membrane as a helical segment; that stretch reads LGAFAGAALLYIIIEPAIVQF. The Extracellular segment spans residues 167–192; it reads DGGQRYILGEKSTAGIFGTYPPLYVG. Residues 193–213 traverse the membrane as a helical segment; sequence IGSAIASEIMGTAMLLLVIMV. The Cytoplasmic portion of the chain corresponds to 214 to 226; that stretch reads TGHPNNLPYKSAQ. A helical membrane pass occupies residues 227–247; sequence GAMIALGITTISLCIGYTSGF. Residues 248 to 278 are Extracellular-facing; sequence SLNPARDFGPRLFTAIAGWGFDVFKVYHYYA. Residues 250-252 carry the NPA 2 motif; the sequence is NPA. The helical transmembrane segment at 279–299 threads the bilayer; sequence LVPMFAPILGGLVGLMLMMPF. At 300-306 the chain is on the cytoplasmic side; the sequence is SFLSVRA.

The protein belongs to the MIP/aquaporin (TC 1.A.8) family.

Its subcellular location is the cell membrane. It catalyses the reaction H2O(in) = H2O(out). Its function is as follows. Water channel required to facilitate the transport of water across membranes. Contributes to water uptake of spores during the early stages of spore germination. Aquaporins AQP1 and AQP2 act as extracellular pH sensors and enable the spores to hydrate under favorable conditions and to commence germination. Wounded vegetables and fruit present acidic pH, so the optimal pH range for germination is adapted to the relevant host pH. In Rhizopus delemar (strain RA 99-880 / ATCC MYA-4621 / FGSC 9543 / NRRL 43880) (Mucormycosis agent), this protein is Aquaporin-1.